Here is a 373-residue protein sequence, read N- to C-terminus: Dual-specificity RNA methyltransferase RlmN (373 aa).

Residue E104 is the Proton acceptor of the active site. Residues 110-349 form the Radical SAM core domain; the sequence is KNQRTTLCIS…VTIRKIRGYD (240 aa). An intrachain disulfide couples C117 to C354. The [4Fe-4S] cluster site is built by C124, C128, and C131. Residues 178–179, S210, 232–234, and N311 each bind S-adenosyl-L-methionine; these read GE and SLH. Catalysis depends on C354, which acts as the S-methylcysteine intermediate.

Belongs to the radical SAM superfamily. RlmN family. It depends on [4Fe-4S] cluster as a cofactor.

The protein resides in the cytoplasm. The catalysed reaction is adenosine(2503) in 23S rRNA + 2 reduced [2Fe-2S]-[ferredoxin] + 2 S-adenosyl-L-methionine = 2-methyladenosine(2503) in 23S rRNA + 5'-deoxyadenosine + L-methionine + 2 oxidized [2Fe-2S]-[ferredoxin] + S-adenosyl-L-homocysteine. It carries out the reaction adenosine(37) in tRNA + 2 reduced [2Fe-2S]-[ferredoxin] + 2 S-adenosyl-L-methionine = 2-methyladenosine(37) in tRNA + 5'-deoxyadenosine + L-methionine + 2 oxidized [2Fe-2S]-[ferredoxin] + S-adenosyl-L-homocysteine. In terms of biological role, specifically methylates position 2 of adenine 2503 in 23S rRNA and position 2 of adenine 37 in tRNAs. m2A2503 modification seems to play a crucial role in the proofreading step occurring at the peptidyl transferase center and thus would serve to optimize ribosomal fidelity. The protein is Dual-specificity RNA methyltransferase RlmN of Buchnera aphidicola subsp. Baizongia pistaciae (strain Bp).